A 409-amino-acid polypeptide reads, in one-letter code: MSAGKLKFDSPAPILKLSKNTGSTPPKVGGTGQASWFQSLKEKKRTGTPPTFEGSGVPDNSNVKPQFQHGYWKRQHRYKPGKGGRKPVADAWYFYYTGTGPFGDLKWGDSNDDVVWVKAKGADTSKIGNYGVRDPDKFDQAPLRFTEGGPDNNYRWDFIALNRGRSRNSSAVTSRENSRPGSRDSSRGRQRSRVDDDLIDRAAKIIMQQQKNGSRISKQKANEMAERKYHKRAIAPGKRIDEVFGQRRKGQAPNFGDDKMIEEGVKDGRLTAMLNLVPTPHACLLGSMVTAKLQPDGLHVRFSFETVVKREDPQFANYSKICDECVDGVGTRPKDDPTPRSRAASKDRNSAPATPKQQRAKKVHKKKEEESSLTEEEEEVNKQLEYDDDVTDIPNKIDWGEGAFDDINI.

2 disordered regions span residues 1–64 (MSAG…SNVK) and 167–197 (RNSS…VDDD). The tract at residues 30 to 161 (GTGQASWFQS…NNYRWDFIAL (132 aa)) is RNA-binding. Residues 32–157 (GQASWFQSLK…GGPDNNYRWD (126 aa)) form the CoV N NTD domain. Positions 176–197 (ENSRPGSRDSSRGRQRSRVDDD) are enriched in basic and acidic residues. The residue at position 192 (Ser-192) is a Phosphoserine; by host. The CoV N CTD domain maps to 217 to 333 (SKQKANEMAE…ECVDGVGTRP (117 aa)). Residues 228 to 335 (KYHKRAIAPG…VDGVGTRPKD (108 aa)) form a dimerization region. An intrachain disulfide couples Cys-322 to Cys-325. Positions 327 to 409 (DGVGTRPKDD…GEGAFDDINI (83 aa)) are disordered. The segment covering 332–349 (RPKDDPTPRSRAASKDRN) has biased composition (basic and acidic residues). Thr-374 is subject to Phosphothreonine; by host.

It belongs to the gammacoronavirus nucleocapsid protein family. In terms of assembly, homooligomer. Both monomeric and oligomeric forms interact with RNA. Interacts with protein M. Interacts with NSP3; this interaction serves to tether the genome to the newly translated replicase-transcriptase complex at a very early stage of infection. Post-translationally, ADP-ribosylated. The ADP-ribosylation is retained in the virion during infection. Phosphorylated on serine and threonine residues.

Its subcellular location is the virion. The protein localises to the host endoplasmic reticulum-Golgi intermediate compartment. It is found in the host Golgi apparatus. Functionally, packages the positive strand viral genome RNA into a helical ribonucleocapsid (RNP) and plays a fundamental role during virion assembly through its interactions with the viral genome and membrane protein M. Plays an important role in enhancing the efficiency of subgenomic viral RNA transcription as well as viral replication. The sequence is that of Nucleoprotein from Gallus gallus (Chicken).